The primary structure comprises 296 residues: Thioredoxin-related transmembrane protein 2 (296 aa).

An N-terminal signal peptide occupies residues 1-48; it reads MAVLAPLIALVYSVPRLSRWLAQPYYLLSALLSAAFLLVRKLPPLCHG. Topologically, residues 49–102 are extracellular; sequence LPTQREDGNPCDFDWREVEILMFLSAIVMMKNRRSITVEQHIGNIFMFSKVANA. A helical transmembrane segment spans residues 103–125; the sequence is ILFFRLDIRMGLLYITLCIVFLM. The Thioredoxin domain occupies 114 to 270; the sequence is LLYITLCIVF…YQRAKKPSKA (157 aa). The Cytoplasmic portion of the chain corresponds to 126–296; sequence TCEPPLYMGP…VSDGENKKDK (171 aa). 3 positions are modified to phosphoserine: S211, S243, and S288. The segment at 266–296 is disordered; the sequence is KPSKAGDSIPEEQPVASAPTTVSDGENKKDK. Residues 293–296 carry the Di-lysine motif motif; the sequence is KKDK.

Monomer. Homodimer; disulfide-linked. Occurs in both reduced and oxidized monomeric form. Oxidative conditions increase homodimerization. Interacts with CANX. Interacts with ATP2A2.

It is found in the endoplasmic reticulum membrane. Its subcellular location is the mitochondrion membrane. Endoplasmic reticulum and mitochondria-associated protein that probably functions as a regulator of cellular redox state and thereby regulates protein post-translational modification, protein folding and mitochondrial activity. Indirectly regulates neuronal proliferation, migration, and organization in the developing brain. This is Thioredoxin-related transmembrane protein 2 (TMX2) from Pongo abelii (Sumatran orangutan).